We begin with the raw amino-acid sequence, 648 residues long: Serine/threonine-protein kinase DCLK3 (648 aa).

Disordered regions lie at residues 86-127 (DDRA…HLGV) and 150-345 (QSLE…PRPM). 5 stretches are compositionally biased toward basic and acidic residues: residues 98–127 (GKWEPEPSSKPPREATLEERHARGEKHLGV), 213–234 (ELRRPSKSMDKKEDRGPEDQES), 255–266 (EGLREVKKDTRP), 277–303 (LREHQAGFEKLRRTRGEEKEAEKEKKP), and 312–338 (TLRDDQPAKLEKEPKTRPEENKPERPS). In terms of domain architecture, Protein kinase spans 356–613 (YETGRVIGDG…AHQVLQHPWI (258 aa)). Residues 362–370 (IGDGNFAVV) and lysine 385 contribute to the ATP site. The Proton acceptor role is filled by aspartate 477. A disordered region spans residues 628–648 (VSPSSEGHFRSQHKRVVEQVS).

Belongs to the protein kinase superfamily. CAMK Ser/Thr protein kinase family. CaMK subfamily.

The protein localises to the cytoplasm. It is found in the nucleus. The catalysed reaction is L-seryl-[protein] + ATP = O-phospho-L-seryl-[protein] + ADP + H(+). The enzyme catalyses L-threonyl-[protein] + ATP = O-phospho-L-threonyl-[protein] + ADP + H(+). This is Serine/threonine-protein kinase DCLK3 (DCLK3) from Homo sapiens (Human).